The primary structure comprises 147 residues: Small ribosomal subunit protein bS6m (147 aa).

It belongs to the bacterial ribosomal protein bS6 family. In terms of assembly, component of the mitochondrial ribosome small subunit (28S) which comprises a 12S rRNA and about 30 distinct proteins.

The protein localises to the mitochondrion. In Drosophila melanogaster (Fruit fly), this protein is Small ribosomal subunit protein bS6m (mRpS6).